Reading from the N-terminus, the 176-residue chain is Magnesium-dependent phosphatase 1 (176 aa).

Catalysis depends on aspartate 11, which acts as the Nucleophile. Mg(2+) is bound at residue aspartate 11. Residues leucine 12 and aspartate 13 each contribute to the phosphate site. A Mg(2+)-binding site is contributed by aspartate 13. Aspartate 13 serves as the catalytic Proton donor. Tryptophan 20 serves as a coordination point for substrate. 3 residues coordinate phosphate: serine 69, arginine 70, and lysine 100. A substrate-binding site is contributed by arginine 70. Position 123 (aspartate 123) interacts with Mg(2+).

Belongs to the HAD-like hydrolase superfamily. The cofactor is Mg(2+).

The enzyme catalyses O-phospho-L-tyrosyl-[protein] + H2O = L-tyrosyl-[protein] + phosphate. Inhibited by vanadate and zinc, and slightly by calcium. Its function is as follows. Magnesium-dependent phosphatase which may act as a tyrosine phosphatase. The protein is Magnesium-dependent phosphatase 1 (MDP1) of Homo sapiens (Human).